Reading from the N-terminus, the 108-residue chain is Parvalbumin beta (108 aa).

EF-hand domains follow at residues 38 to 73 and 77 to 108; these read KPTD…FCSS and LSNA…LVRS. Ca(2+) is bound by residues Asp-51, Asp-53, Ser-55, Tyr-57, Glu-59, Glu-62, Asp-90, Asp-92, Asp-94, Lys-96, and Glu-101.

Belongs to the parvalbumin family.

Functionally, in muscle, parvalbumin is thought to be involved in relaxation after contraction. It binds two calcium ions. In Amphiuma means (Salamander), this protein is Parvalbumin beta.